The sequence spans 255 residues: MNINKIALIYNQNSKHLAIIEEIKKLYNYCKIEEAEAIIVIGGDGALLHNIHRYMHLNIPFYGVNLGNLGFLMNPLDTKNLSQNIHESTVSILNPLLMQAEDISGQIYTALAINEVSIFRKTNQAAKFRIDVNGIERMSELVADGALIATPAGSSAYNLSAGGPILPLESNMLCLTPICSFRPRRWHGALLLASATIQFKILNTNKRPVNATADFQEFNNITNVTVKSTTDTPIKLLFNKNHTLEDRIIKEQFGG.

The active-site Proton acceptor is Asp-44. NAD(+) contacts are provided by residues 44–45 (DG), His-49, 114–115 (NE), Asp-144, Ala-152, 155–160 (SAYNLS), and Gln-216.

It belongs to the NAD kinase family. A divalent metal cation is required as a cofactor.

Its subcellular location is the cytoplasm. The enzyme catalyses NAD(+) + ATP = ADP + NADP(+) + H(+). Functionally, involved in the regulation of the intracellular balance of NAD and NADP, and is a key enzyme in the biosynthesis of NADP. Catalyzes specifically the phosphorylation on 2'-hydroxyl of the adenosine moiety of NAD to yield NADP. This chain is NAD kinase, found in Rickettsia akari (strain Hartford).